The primary structure comprises 319 residues: Urease accessory protein UreD (319 aa).

Positions Q298 to H319 are disordered.

Belongs to the UreD family. As to quaternary structure, ureD, UreF and UreG form a complex that acts as a GTP-hydrolysis-dependent molecular chaperone, activating the urease apoprotein by helping to assemble the nickel containing metallocenter of UreC. The UreE protein probably delivers the nickel.

It localises to the cytoplasm. In terms of biological role, required for maturation of urease via the functional incorporation of the urease nickel metallocenter. The sequence is that of Urease accessory protein UreD from Synechococcus sp. (strain WH7805).